The sequence spans 299 residues: Ethylmalonyl-CoA decarboxylase (299 aa).

This sequence belongs to the enoyl-CoA hydratase/isomerase family.

Its subcellular location is the cytoplasm. It localises to the cytosol. It carries out the reaction (2S)-ethylmalonyl-CoA + H(+) = butanoyl-CoA + CO2. The catalysed reaction is (S)-methylmalonyl-CoA + H(+) = propanoyl-CoA + CO2. The enzyme catalyses (2R)-ethylmalonyl-CoA + H(+) = butanoyl-CoA + CO2. Functionally, decarboxylates ethylmalonyl-CoA, a potentially toxic metabolite, to form butyryl-CoA, suggesting it might be involved in metabolite proofreading. Acts preferentially on (S)-ethylmalonyl-CoA but also has some activity on the (R)-isomer. Also has methylmalonyl-CoA decarboxylase activity at lower level. The sequence is that of Ethylmalonyl-CoA decarboxylase (echdc1) from Xenopus laevis (African clawed frog).